The sequence spans 99 residues: Large ribosomal subunit protein uL23 (99 aa).

This sequence belongs to the universal ribosomal protein uL23 family. In terms of assembly, part of the 50S ribosomal subunit. Contacts protein L29, and trigger factor when it is bound to the ribosome.

One of the early assembly proteins it binds 23S rRNA. One of the proteins that surrounds the polypeptide exit tunnel on the outside of the ribosome. Forms the main docking site for trigger factor binding to the ribosome. This is Large ribosomal subunit protein uL23 from Pseudomonas aeruginosa (strain LESB58).